Here is a 159-residue protein sequence, read N- to C-terminus: uncharacterized protein (159 aa).

The protein localises to the mitochondrion. This is an uncharacterized protein from Arabidopsis thaliana (Mouse-ear cress).